Consider the following 349-residue polypeptide: Interferon-stimulated 20 kDa exonuclease-like 2 (349 aa).

Disordered regions lie at residues 1–100 (MSTL…AAVP) and 126–166 (ALPK…KYSG). A compositionally biased stretch (basic and acidic residues) spans 14 to 23 (PPKKALEGNA). The span at 24 to 47 (KHRKFVKKRRLLERKGFLNKKKQP) shows a compositional bias: basic residues. Positions 54–66 (LHSEPSQKGETPR) are enriched in basic and acidic residues. The segment covering 70 to 87 (TWKATPLPKKKTTAASSS) has biased composition (low complexity). Over residues 130–142 (IKSHPTRPQKKGS) the composition is skewed to basic residues. The 157-residue stretch at 175–331 (MVAIDCEMVG…EDAQATMELY (157 aa)) folds into the Exonuclease domain.

It is found in the nucleus. It localises to the nucleolus. In terms of biological role, 3'-&gt; 5'-exoribonuclease involved in ribosome biogenesis in the processing of the 12S pre-rRNA. Displays a strong specificity for a 3'-end containing a free hydroxyl group. The chain is Interferon-stimulated 20 kDa exonuclease-like 2 (ISG20L2) from Bos taurus (Bovine).